The primary structure comprises 141 residues: Flagellar assembly factor FliW (141 aa).

It belongs to the FliW family. In terms of assembly, interacts with translational regulator CsrA and flagellin(s).

The protein localises to the cytoplasm. Its function is as follows. Acts as an anti-CsrA protein, binds CsrA and prevents it from repressing translation of its target genes, one of which is flagellin. Binds to flagellin and participates in the assembly of the flagellum. The protein is Flagellar assembly factor FliW of Clostridium beijerinckii (strain ATCC 51743 / NCIMB 8052) (Clostridium acetobutylicum).